Here is a 1350-residue protein sequence, read N- to C-terminus: ABC-type transporter MDR1 (1350 aa).

The segment covering 1–11 (MDTVHEGHHGS) has biased composition (basic and acidic residues). The disordered stretch occupies residues 1–84 (MDTVHEGHHG…DEGEDPFAHL (84 aa)). Residues 22–33 (VEVTNYEKTQLG) show a composition bias toward polar residues. The segment covering 52-63 (KKHKSQKEKKHK) has biased composition (basic residues). The ABC transmembrane type-1 1 domain maps to 121 to 411 (VLSALSSIIG…VAPNIQAFTT (291 aa)). 6 consecutive transmembrane segments (helical) span residues 124-144 (ALSS…FGGL), 170-190 (LYFL…TAGF), 243-263 (KVGL…VSFI), 271-291 (ILMS…GFIV), 350-370 (GSMI…AFWM), and 380-400 (IEVG…FALG). An ABC transporter 1 domain is found at 446-691 (IELRNIRHIY…QGAYYNLVEA (246 aa)). 481 to 488 (GESGSGKS) is a binding site for ATP. Basic and acidic residues predominate over residues 712 to 731 (KDQNLKHETTKGEQPEDGLK). The tract at residues 712-734 (KDQNLKHETTKGEQPEDGLKLAR) is disordered. A run of 6 helical transmembrane segments spans residues 779-799 (IGII…VFFA), 830-850 (FMLA…FAVC), 903-923 (LGTI…SLAI), 929-949 (LVCI…FWML), 1014-1034 (ASQS…GTLI), and 1044-1064 (FFLC…IFSF). The region spanning 779–1070 (IGIICSVITG…IFSFAPDMGK (292 aa)) is the ABC transmembrane type-1 2 domain. The ABC transporter 2 domain maps to 1105-1343 (IEFRDVHFRY…RGRYWELVNL (239 aa)). Asn1127 is a glycosylation site (N-linked (GlcNAc...) asparagine). Residue 1140 to 1147 (GASGCGKS) participates in ATP binding.

It belongs to the ABC transporter superfamily. ABCB family. Multidrug resistance exporter (TC 3.A.1.201) subfamily.

The protein localises to the cell membrane. Functionally, ABC-type transporter that is involved in the secretion of liamocins, glycolipids (also called heavy oils) composed of a single mannitol or arabitol headgroup linked to either three, four or even six 3,5-dihydroxydecanoic ester tail-groups. The chain is ABC-type transporter MDR1 from Aureobasidium melanogenum (Aureobasidium pullulans var. melanogenum).